Consider the following 367-residue polypeptide: Septin-1 (367 aa).

The region spanning 22-296 (KGFDFTLMVA…EGYRARCLQS (275 aa)) is the Septin-type G domain. Positions 32–39 (GESGLGKS) are G1 motif. GTP-binding positions include 32–39 (GESGLGKS), Thr-66, Gly-92, and 171–179 (KADALMPKE). Residues 89 to 92 (DTPG) are G3 motif. Positions 170–173 (GKAD) are G4 motif. The residue at position 206 (Ser-206) is a Phosphoserine. Positions 229 and 245 each coordinate GTP. Ser-248 is subject to Phosphoserine; by AURKB. The residue at position 251 (Thr-251) is a Phosphothreonine. Phosphoserine; by AURKB is present on residues Ser-307 and Ser-315.

This sequence belongs to the TRAFAC class TrmE-Era-EngA-EngB-Septin-like GTPase superfamily. Septin GTPase family. Septins polymerize into heterooligomeric protein complexes that form filaments, and can associate with cellular membranes, actin filaments and microtubules. GTPase activity is required for filament formation. Interacts with AURKB.

It localises to the cytoplasm. It is found in the cytoskeleton. Its subcellular location is the microtubule organizing center. The protein resides in the centrosome. The protein localises to the midbody. In terms of biological role, filament-forming cytoskeletal GTPase. May play a role in cytokinesis (Potential). This is Septin-1 from Bos taurus (Bovine).